The primary structure comprises 911 residues: MITAKKHPLDNCQLFVQLKKLFHDYNEKVQRLKDMIYWSGNDEHIAKICDQVTDLLVEHDLIIQPPDTMDPCAMNHLRGLLVYLVLNTAHDDIQCESQWSANVMHLCNQLPPIPLFLTIAIAVNCCLMEPLEEFLACGPRWLTIQYFEAFNEALSVINSDCVETLPLLSAALRAAGRAIVNCNLPAENKQLLRQIACMEHRHILDSKQRLHTLPRPSTRKIYLAKAMDHLIEVLLYTLNDPLKREKPNCFAVYSQITEDISDSNSSDPMPDLRHFAQILLDVLQRIFQLVSVDTYMYWHEMKSKSALYNCQELICRQTAELLKVLQSDKLLGEHPVCKQMQSFADAAKTLEQRVAEMRIGELLAFIDSGMATNEELLAGLDNLFSRFIAFGSDECLETMANHLIMLTKKHAQIILSFLGQVVESEMVVEDEGISVTEVNQGDDEDETSSNDDYEELLSLVLRPLFMQLNVEDKMEVLLLRDEQNVTQGFNFKAPDHRERRIRFFNQLDYNKRFPITEFLVLCFENARQTWIDFSHLGVTHTRFSKLFWHIAQSCPKHAAFHISACADNILVNEQLLQKPYALQFTLYLYGHRQILNGLYTSARQLCVSLKDGRCPYGEDELRQAQNRFLDACAYGLAKFIEPMNLPSLQLILKLLKQISLGESNLITRGTAELNALEKEHPKLENGDDAPAVKVAKHYTYLHASLPEWRLKHWKLISHVMKTIDALRWDLATFEDFRVDNLELAVWYWQDGLSHLTFLGTEFRQRILNQVSKLKHKDFWIIYLKEDTLKDTRSFLKLLTQSSAQEANDLFNKLLKKRADCAVMGDLSDAVVKVNSESAFMAFRFLFREYLIAFRSHAKHNKTITKRQHWDHLMAVVAKAPFSIRNEIMELASKAFAVRFGINIQEQQAAKC.

Component of the core survival motor neuron (SMN) complex composed of Smn, Gem2, Gem3, rig/Gem5 and one of 3 almost identical Gem4 paralogs encoded by Glos/Gem4a, Gem4b or Gem4c. Interacts with Smn; the interaction is probably indirect.

Component of the survival motor neuron (SMN) complex that catalyzes the assembly of small nuclear ribonucleoproteins (snRNPs), the building blocks of the spliceosome, and thereby plays an important role in the splicing of cellular pre-mRNAs. One of 3 almost identical paralogs (Glos/Gem4a, Gem4b and Gem4c), resulting from a genomic triplication, that have some redundant function. Required for neuromuscular function and organismal viability. The protein is Gem-associated protein 4a of Drosophila melanogaster (Fruit fly).